Consider the following 386-residue polypeptide: Latent membrane protein 1 (386 aa).

The Cytoplasmic portion of the chain corresponds to 1–23 (MEHDLERGPPGPRRPPRGPPLSS). The helical transmembrane segment at 24-44 (SLGLALLLLLLALLFWLYIVM) threads the bilayer. Residues 45 to 51 (SDWTGGA) lie on the Extracellular side of the membrane. The helical transmembrane segment at 52 to 72 (LLVLYSFALMLIIIILIIFIF) threads the bilayer. Residues 73–75 (RRD) lie on the Cytoplasmic side of the membrane. A helical membrane pass occupies residues 76-96 (LLCPLGALCILLLMITLLLIA). Topologically, residues 97-106 (LWNLHGQALF) are extracellular. The helical transmembrane segment at 107–127 (LGIVLFIFGCLLVLGIWIYLL) threads the bilayer. Topologically, residues 128 to 139 (EMLWRLGATIWQ) are cytoplasmic. The helical transmembrane segment at 140–160 (LLAFFLAFFLDLILLIIALYL) threads the bilayer. Residues 161–163 (QQN) are Extracellular-facing. A helical membrane pass occupies residues 164-184 (WWTLLVDLLWLLLFLAILIWM). Over 185–386 (YYHGQRHSDE…HGPVQLSYYD (202 aa)) the chain is Cytoplasmic. The interval 194-232 (EHHHDDSLPHPQQATDDSGHESDSNSNEGRHHLLVSGAG) is CTAR1. The interval 194–386 (EHHHDDSLPH…HGPVQLSYYD (193 aa)) is disordered. Positions 204 to 208 (PQQAT) match the Interaction with host TRAF proteins motif. Positions 210–224 (DSGHESDSNSNEGRH) are enriched in basic and acidic residues. Positions 251–267 (NGPQDPDNTDDNGPQDP) are enriched in low complexity. Residues 351–386 (GHGGGDPHLPTLLLGSSGSGGDDDDPHGPVQLSYYD) form a CTAR2 region.

The protein belongs to the herpesviridae LMP-1 family. In terms of assembly, interacts (via PXQXT motif) with host tumor necrosis factor receptor-associated factor (TRAF) proteins TRAF1, TRAF2, TRAF3 and TRAF5. Interacts with human protein ZMYND11; leading to negatively regulate NF-kappa-B activation. Interacts with host UBE2I; this interaction induces the sumoylation of various cellular proteins. Interacts with host IRF7. Interacts with host TYK2. Ubiquitinated on the N-terminus.

It localises to the host cell membrane. Functionally, acts as a CD40 functional homolog to prevent apoptosis of infected B-lymphocytes and drive their proliferation. Functions as a constitutively active tumor necrosis factor receptor that induces the activation of several signaling pathways, including those of the NF-kappa-B family. LMP1 signaling leads to up-regulation of antiapoptotic proteins and provide growth signals in latently infected cells. Interacts with host UBE2I and subsequently affects the sumoylation state of several cellular proteins. For example, induces the sumoylation of host IRF7 thereby limiting its transcriptional activity and modulating the activation of innate immune responses. Also inhibits host IFN-alpha-stimulated STAT2 nuclear translocation and interferon-stimulated response element transcriptional activity by interacting with and inhibiting host TYK2. Induces SUMO expression during viral latency thereby dysregulating the host sumoylation processes. This chain is Latent membrane protein 1 (LMP1), found in Epstein-Barr virus (strain B95-8) (HHV-4).